The sequence spans 263 residues: MKYSTTKIPPAKMNSSADKALVKSPKLRKSQQKPEGVCQMYFMQLRSGLIIEKTSCYFRKEITKRYSPRTAEKCRKQCLVFTACHQQLNKDFTSDVPMLQKCFGRANVPSIQEYSASLSTYNDQSITFVFEDGSYEIYVEDLRKGQEKDKVLFRYYDSQSPSHETGDDVDGQTLLVNLSPTKDKDFLLHANNEEHSVELQKCENQLPDQAFFLLHRKSSECVSFECKNNPGVFIGVKDNHLALIKVGDQTKDSYIEKTIFKLS.

The segment covering 1-17 has biased composition (polar residues); the sequence is MKYSTTKIPPAKMNSSA. The segment at 1–28 is disordered; the sequence is MKYSTTKIPPAKMNSSADKALVKSPKLR. The homeodomain-like HTH domain stretch occupies residues 1–65; sequence MKYSTTKIPP…CYFRKEITKR (65 aa). Residues 62–103 are interaction with RELA; that stretch reads ITKRYSPRTAEKCRKQCLVFTACHQQLNKDFTSDVPMLQKCF.

This sequence belongs to the IL-1 family. Highly divergent. As to quaternary structure, forms a 1:1:1 heterotrimeric complex with its primary high-affinity receptor IL1RL1 and the coreceptor IL1RAP. Interacts with cargo receptor TMED10; the interaction mediates the translocation from the cytoplasm into the ERGIC (endoplasmic reticulum-Golgi intermediate compartment) and thereby secretion. Post-translationally, the full-length protein can be released from cells and is able to signal via the IL1RL1/ST2 receptor. However, proteolytic processing by CELA1, CSTG/cathepsin G and ELANE/neutrophil elastase produces C-terminal peptides that are more active than the unprocessed full-length protein. May also be proteolytically processed by calpains. Proteolytic cleavage mediated by apoptotic caspases including CASP3 and CASP7 results in IL33 inactivation. In vitro proteolytic cleavage by CASP1 was reported but could not be confirmed in vivo suggesting that IL33 is probably not a direct substrate for that caspase. Expressed in cultured umbilical artery smooth muscle cells after stimulation with IL1A and IL1B, and to a lesser extent with IFNG. Expressed in vasospastic cerebral arteries after subarachnoid hemorrhage.

The protein localises to the nucleus. It localises to the chromosome. Its subcellular location is the cytoplasm. The protein resides in the cytoplasmic vesicle. It is found in the secretory vesicle. The protein localises to the secreted. Its function is as follows. Cytokine that binds to and signals through the IL1RL1/ST2 receptor which in turn activates NF-kappa-B and MAPK signaling pathways in target cells. Involved in the maturation of Th2 cells inducing the secretion of T-helper type 2-associated cytokines. Also involved in activation of mast cells, basophils, eosinophils and natural killer cells. Acts as a chemoattractant for Th2 cells, and may function as an 'alarmin', that amplifies immune responses during tissue injury. Induces rapid UCP2-dependent mitochondrial rewiring that attenuates the generation of reactive oxygen species and preserves the integrity of Krebs cycle required for persistent production of itaconate and subsequent GATA3-dependent differentiation of inflammation-resolving alternatively activated macrophages. In terms of biological role, in quiescent endothelia the uncleaved form is constitutively and abundantly expressed, and acts as a chromatin-associated nuclear factor with transcriptional repressor properties, it may sequester nuclear NF-kappaB/RELA, lowering expression of its targets. This form is rapidely lost upon angiogenic or pro-inflammatory activation. The polypeptide is Interleukin-33 (IL33) (Canis lupus familiaris (Dog)).